The sequence spans 518 residues: Retinal dehydrogenase 2 (518 aa).

The residue at position 168 (Y168) is a Phosphotyrosine. NAD(+) is bound by residues 184-186 (IPW), 210-213 (KPAE), and 264-266 (STE). E286 serves as the catalytic Proton acceptor. Catalysis depends on C320, which acts as the Nucleophile. S351 bears the Phosphoserine mark. Residues 366–370 (KQYNK) and E417 each bind NAD(+).

It belongs to the aldehyde dehydrogenase family. Homotetramer.

Its subcellular location is the cytoplasm. The catalysed reaction is retinal + NAD(+) + H2O = retinoate + NADH + 2 H(+). The enzyme catalyses all-trans-retinal + NAD(+) + H2O = all-trans-retinoate + NADH + 2 H(+). It carries out the reaction all-trans-13,14-dihydroretinal + NAD(+) + H2O = all-trans-13,14-dihydroretinoate + NADH + 2 H(+). Its pathway is cofactor metabolism; retinol metabolism. In terms of biological role, catalyzes the NAD-dependent oxidation of aldehyde substrates, such as all-trans-retinal and all-trans-13,14-dihydroretinal, to their corresponding carboxylic acids, all-trans-retinoate and all-trans-13,14-dihydroretinoate, respectively. Retinoate signaling is critical for the transcriptional control of many genes, for instance it is crucial for initiation of meiosis in both male and female. Recognizes retinal as substrate, both in its free form and when bound to cellular retinol-binding protein. Lacks activity with benzaldehyde, acetaldehyde and octanal. Displays complete lack of activity with citral. The protein is Retinal dehydrogenase 2 (Aldh1a2) of Mus musculus (Mouse).